The primary structure comprises 288 residues: 33 kDa chaperonin (288 aa).

Cystine bridges form between cysteine 235-cysteine 237 and cysteine 268-cysteine 271.

It belongs to the HSP33 family. Under oxidizing conditions two disulfide bonds are formed involving the reactive cysteines. Under reducing conditions zinc is bound to the reactive cysteines and the protein is inactive.

The protein resides in the cytoplasm. Redox regulated molecular chaperone. Protects both thermally unfolding and oxidatively damaged proteins from irreversible aggregation. Plays an important role in the bacterial defense system toward oxidative stress. This Streptococcus thermophilus (strain CNRZ 1066) protein is 33 kDa chaperonin.